Here is a 600-residue protein sequence, read N- to C-terminus: Proline dehydrogenase 1, mitochondrial (600 aa).

The tract at residues 155 to 177 (AEHKEMESCTSAAERDGSGTNKR) is disordered. Lysine 368 and lysine 486 each carry N6-acetyllysine.

It belongs to the proline oxidase family. The cofactor is FAD. In terms of tissue distribution, expressed in lung, skeletal muscle and brain, to a lesser extent in heart and kidney, and weakly in liver, placenta and pancreas.

The protein resides in the mitochondrion matrix. It carries out the reaction L-proline + a quinone = (S)-1-pyrroline-5-carboxylate + a quinol + H(+). Its pathway is amino-acid degradation; L-proline degradation into L-glutamate; L-glutamate from L-proline: step 1/2. In terms of biological role, converts proline to delta-1-pyrroline-5-carboxylate. This Homo sapiens (Human) protein is Proline dehydrogenase 1, mitochondrial.